The sequence spans 474 residues: Gamma-aminobutyric acid receptor subunit beta-1 (474 aa).

A signal peptide spans 1–25 (MWTVQNRESLGLLSFPVMITMVCCA). Over 26–245 (HSTNEPSNMS…SFRLKRNIGY (220 aa)) the chain is Extracellular. Asparagine 105 carries an N-linked (GlcNAc...) asparagine glycan. Residue tyrosine 122 coordinates histamine. Cysteine 161 and cysteine 175 are oxidised to a cystine. Residue asparagine 174 is glycosylated (N-linked (GlcNAc...) asparagine). Histamine-binding positions include 181–182 (SY) and threonine 227. 2 residues coordinate 4-aminobutanoate: tyrosine 182 and threonine 227. Transmembrane regions (helical) follow at residues 246-267 (FILQTYMPSTLITILSWVSFWI), 271-293 (ASAARVALGITTVLTMTTISTHL), and 305-327 (AIDIYLMGCFVFVFLALLEYAFV). The Cytoplasmic segment spans residues 328–451 (NYIFFGKGPQ…DLTDVNSIDK (124 aa)). The helical transmembrane segment at 452-473 (WSRMFFPITFSLFNVVYWLYYV) threads the bilayer.

Belongs to the ligand-gated ion channel (TC 1.A.9) family. Gamma-aminobutyric acid receptor (TC 1.A.9.5) subfamily. GABRB1 sub-subfamily. Heteropentamer, formed by a combination of alpha (GABRA1-6), beta (GABRB1-3), gamma (GABRG1-3), delta (GABRD), epsilon (GABRE), rho (GABRR1-3), pi (GABRP) and theta (GABRQ) chains, each subunit exhibiting distinct physiological and pharmacological properties. Binds UBQLN1.

It localises to the postsynaptic cell membrane. The protein resides in the cell membrane. It carries out the reaction chloride(in) = chloride(out). Potentiated by etomidate, propofol, pregnanolone and flurazepam. Potentiated by histamine. In terms of biological role, beta subunit of the heteropentameric ligand-gated chloride channel gated by gamma-aminobutyric acid (GABA), a major inhibitory neurotransmitter in the brain. GABA-gated chloride channels, also named GABA(A) receptors (GABAAR), consist of five subunits arranged around a central pore and contain one or two GABA active binding sites located at the alpha and beta subunit interfaces, depending on subunit composition. When activated by GABA, GABAARs selectively allow the flow of chloride anions across the cell membrane down their electrochemical gradient. Chloride influx into the postsynaptic neuron following GABAAR opening decreases the neuron ability to generate a new action potential, thereby reducing nerve transmission. Beta-containing GABAARs can simultaneously bind GABA and histamine where histamine binds at the interface of two neighboring beta subunits, which may be involved in the regulation of sleep and wakefulness. The chain is Gamma-aminobutyric acid receptor subunit beta-1 from Homo sapiens (Human).